Consider the following 64-residue polypeptide: MKSTLMTASLLILVVLFIIDYASVYAEFIDGEISLERERDIPCFETCMKLYHIPKLCYIKCRKH.

The N-terminal stretch at methionine 1–alanine 26 is a signal peptide. A propeptide spanning residues glutamate 27–glutamate 38 is cleaved from the precursor. 2 disulfide bridges follow: cysteine 43-cysteine 61 and cysteine 47-cysteine 57.

It belongs to the short scorpion toxin superfamily. Potassium channel inhibitor kappa-KTx family. Kappa-KTx 4 subfamily. As to expression, expressed by the venom gland.

Its subcellular location is the secreted. Functionally, potassium channel inhibitor (Kv). This chain is Potassium channel toxin kappa-KTx 4.1, found in Heterometrus petersii (Asian forest scorpion).